A 352-amino-acid polypeptide reads, in one-letter code: B1 bradykinin receptor (352 aa).

At 1–41 (MASWPPLQLQSSNQSQLFPQNATACDNAPEAWDLLHRVLPT) the chain is on the extracellular side. N-linked (GlcNAc...) asparagine glycosylation is found at asparagine 13 and asparagine 21. The chain crosses the membrane as a helical span at residues 42 to 62 (FIISICSFGLLGNLFVLLVFL). The Cytoplasmic portion of the chain corresponds to 63 to 72 (LPRRRLNVAE). A helical membrane pass occupies residues 73-93 (IYLANLAASDLVFVLGLPFWA). Topologically, residues 94–110 (ENIWNQFNWPFGALLCR) are extracellular. Cysteine 109 and cysteine 188 are oxidised to a cystine. The helical transmembrane segment at 111–131 (VINGIIKANLFISIFLVVAIS) threads the bilayer. Residues 132 to 153 (QDRYCVLVHPMASRRRQRRRQA) are Cytoplasmic-facing. A helical membrane pass occupies residues 154 to 174 (RVTCVLIWVVGGLLSIPTFLL). The Extracellular portion of the chain corresponds to 175 to 206 (RSIQAVPDLNITACILLLPHEAWHFARIVELN). Asparagine 184 is a glycosylation site (N-linked (GlcNAc...) asparagine). A helical membrane pass occupies residues 207 to 227 (ILAFLLPLAAIIFFNYHILAS). Residues 228–250 (LRGREEVSRTRCGGSKDSKTTAL) lie on the Cytoplasmic side of the membrane. Residues 251–271 (ILTLVVAFLVCWAPYHFFAFL) form a helical membrane-spanning segment. The Extracellular portion of the chain corresponds to 272–294 (EFLFQVQAVRGCFWEDFIDLGLQ). Residues 295–315 (LANFLAFTNSSLNPVIYVFAG) traverse the membrane as a helical segment. Over 316 to 352 (RLFRTKVWELYKQCTPKSLAPISSSHRKEIFQLFWRN) the chain is Cytoplasmic. Cysteine 329 carries S-palmitoyl cysteine lipidation.

The protein belongs to the G-protein coupled receptor 1 family. Bradykinin receptor subfamily. BDKRB1 sub-subfamily.

It is found in the cell membrane. Functionally, this is a receptor for bradykinin. Could be a factor in chronic pain and inflammation. The polypeptide is B1 bradykinin receptor (BDKRB1) (Macaca fascicularis (Crab-eating macaque)).